The chain runs to 987 residues: MATRKARNPLAFMPWPVTILTTAMYLALIIPLLVIHHNVPPAPRTSPNGLNLTEAWQDLQSLTKGFHPYNSHQNDEVRSWLLERIDAIKQSTPSTEEYRDAKEEKPDVFVFDDLVSNLTFIDKSVGVYFEGTNILVYIRGSEDNKQNWWETPGRAPVGKGGVLVNAHYDSVSTGYGATDDGVGVVTCLQLVKYFLTPGHAPRRGLVVLFNNGEEDYLNGARVYSQHPMARFAHTFLNLEGAGAGGRATLFRSSDTEVTQAYAKSEHPFGSVLSANGFEKGLISSQTDYVVLEGILGLRGLDVAFFEPRARYHTDQDDARHTSIDSLWHMLSTAVATTEELVSDTTDRFDGHIRDDGTVPSGSGTRAVWFDLFGSAFAVFRLHTLFALSVTLLIVAPLTLLVTSVILSRADKMYLFRSSVYSEINDDYIPLRGLRGFFRFPFLISIPTGVTVGLAYMVTKVNPFIAHSSSYAVWSMMISAWIFLAWFVSRVANSARPSAFHRVYTWTWMFVLTWSLMVVCTVYEHEEGLAGGYFIFFYFAGTFLATWISYLELFALPTKSEYVGRLAESRRPSTQGSRLAASGDEHQDDAAEEDPTESTSLLHGRHRPTFANYVRVGVDRASQDEEEEEEDPNVYEHEQGWSGVLPRWTWLLQLLITAPVILMLIVPLALLTTSALSQTGQDGSPQLLIYLFISCLTALLFAPMLPFIHRYTYHLPIFLLFVFIGTMIYNLVAFPFADSNRLKLFFLQEVDLDNGISTASLTGMPPFVSDVTYGLPSAAGQNESCDWTFRGKRKLQRCSWSAPLPHVVPDGDSLSVSSEDADSLLDATELSPDWISFSISHPQRDSSSVRFEVSGQNTRNCRINMDGNSITNFSVIGSSAPDHRFLNPSPDGLNRIQLWSRTWDNKWTVDVDFSKHDSSETDEVDESSITGRITCLWSDNNRVGLIPALDEVRQFSPAWVAVTKFSDGLIEGSRAFEIKRSSLGALGS.

The Cytoplasmic portion of the chain corresponds to 1 to 14 (MATRKARNPLAFMP). The chain crosses the membrane as a helical span at residues 15–35 (WPVTILTTAMYLALIIPLLVI). At 36 to 384 (HHNVPPAPRT…AFAVFRLHTL (349 aa)) the chain is on the vacuolar side. Residues asparagine 51 and asparagine 117 are each glycosylated (N-linked (GlcNAc...) asparagine). 2 residues coordinate Zn(2+): histidine 167 and aspartate 179. The active-site Proton acceptor is glutamate 213. Zn(2+) is bound by residues glutamate 214, glutamate 239, and histidine 312. The helical transmembrane segment at 385-405 (FALSVTLLIVAPLTLLVTSVI) threads the bilayer. Residues 406 to 435 (LSRADKMYLFRSSVYSEINDDYIPLRGLRG) lie on the Cytoplasmic side of the membrane. Residues 436-456 (FFRFPFLISIPTGVTVGLAYM) form a helical membrane-spanning segment. Topologically, residues 457–466 (VTKVNPFIAH) are vacuolar. Residues 467–487 (SSSYAVWSMMISAWIFLAWFV) traverse the membrane as a helical segment. Residues 488 to 501 (SRVANSARPSAFHR) lie on the Cytoplasmic side of the membrane. A helical membrane pass occupies residues 502-522 (VYTWTWMFVLTWSLMVVCTVY). The Vacuolar portion of the chain corresponds to 523 to 526 (EHEE). Residues 527–547 (GLAGGYFIFFYFAGTFLATWI) traverse the membrane as a helical segment. The Cytoplasmic portion of the chain corresponds to 548–649 (SYLELFALPT…WSGVLPRWTW (102 aa)). A disordered region spans residues 572 to 600 (STQGSRLAASGDEHQDDAAEEDPTESTSL). Residues 650–670 (LLQLLITAPVILMLIVPLALL) traverse the membrane as a helical segment. Residues 671-686 (TTSALSQTGQDGSPQL) are Vacuolar-facing. Residues 687–707 (LIYLFISCLTALLFAPMLPFI) form a helical membrane-spanning segment. The Cytoplasmic portion of the chain corresponds to 708–715 (HRYTYHLP). A helical membrane pass occupies residues 716-736 (IFLLFVFIGTMIYNLVAFPFA). Residues 737-987 (DSNRLKLFFL…KRSSLGALGS (251 aa)) are Vacuolar-facing. Residues asparagine 781 and asparagine 871 are each glycosylated (N-linked (GlcNAc...) asparagine).

It belongs to the peptidase M28 family. Zn(2+) serves as cofactor.

The protein localises to the vacuole membrane. Its function is as follows. May be involved in vacuolar sorting and osmoregulation. The sequence is that of Vacuolar membrane protease from Penicillium rubens (strain ATCC 28089 / DSM 1075 / NRRL 1951 / Wisconsin 54-1255) (Penicillium chrysogenum).